The sequence spans 232 residues: Octanoyltransferase (232 aa).

Positions 32–219 (NIIYDTLILL…SFKVFNFSSY (188 aa)) constitute a BPL/LPL catalytic domain. Substrate-binding positions include 77-84 (RGGDITYH), 140-142 (AIG), and 153-155 (GFA). Cys171 serves as the catalytic Acyl-thioester intermediate.

The protein belongs to the LipB family.

The protein resides in the cytoplasm. It carries out the reaction octanoyl-[ACP] + L-lysyl-[protein] = N(6)-octanoyl-L-lysyl-[protein] + holo-[ACP] + H(+). Its pathway is protein modification; protein lipoylation via endogenous pathway; protein N(6)-(lipoyl)lysine from octanoyl-[acyl-carrier-protein]: step 1/2. Functionally, catalyzes the transfer of endogenously produced octanoic acid from octanoyl-acyl-carrier-protein onto the lipoyl domains of lipoate-dependent enzymes. Lipoyl-ACP can also act as a substrate although octanoyl-ACP is likely to be the physiological substrate. The polypeptide is Octanoyltransferase (Dictyoglomus turgidum (strain DSM 6724 / Z-1310)).